Reading from the N-terminus, the 159-residue chain is MADDNNNGATNPTLSILAQYTKDLSFENPGAPRSLQARDKAPTININVNVNANPLSDTDFDVVLSLNAEAKDDDKTVFHTELVYGGVFRVAGFPQEHMLPVLFIECPRMLFPFARQIIADVTRNGGFPPLMIDPIDFTQMFAQRVAEEQARAKVQAVPN.

This sequence belongs to the SecB family. In terms of assembly, homotetramer, a dimer of dimers. One homotetramer interacts with 1 SecA dimer.

It localises to the cytoplasm. Its function is as follows. One of the proteins required for the normal export of preproteins out of the cell cytoplasm. It is a molecular chaperone that binds to a subset of precursor proteins, maintaining them in a translocation-competent state. It also specifically binds to its receptor SecA. The sequence is that of Protein-export protein SecB from Rhizobium etli (strain CIAT 652).